The chain runs to 275 residues: uncharacterized protein (275 aa).

Position 45 (Asp-45) interacts with NADPH. Active-site proton donor residues include Tyr-50 and His-111. 7 residues coordinate NADPH: Ser-139, Gln-162, Leu-191, Lys-196, Ser-232, Ser-233, and Arg-237.

Belongs to the aldo/keto reductase family.

The protein localises to the cytoplasm. It localises to the nucleus. This is an uncharacterized protein from Schizosaccharomyces pombe (strain 972 / ATCC 24843) (Fission yeast).